The following is a 248-amino-acid chain: uncharacterized protein (248 aa).

Belongs to the glycosyltransferase 2 family.

This is an uncharacterized protein from Acanthamoeba polyphaga (Amoeba).